Here is a 262-residue protein sequence, read N- to C-terminus: Elongator complex protein 5 (262 aa).

Disordered stretches follow at residues 181 to 214 (TPLD…FKIE) and 229 to 262 (PYER…DLCI). A compositionally biased stretch (polar residues) spans 200 to 211 (AEQTTEPASSTF). Residues 246-262 (DADDDFDEEDPDEDLCI) show a composition bias toward acidic residues.

It belongs to the ELP5 family. Component of the elongator complex composed of Elp1, Elp2, Elp3, Elp4, Elp5 and Elp6. The elongator complex associates with and stabilizes microtubules; efficient interaction requires the full complex.

It localises to the cytoplasm. The protein resides in the nucleus. The protein localises to the cytoskeleton. Its subcellular location is the spindle. It functions in the pathway tRNA modification; 5-methoxycarbonylmethyl-2-thiouridine-tRNA biosynthesis. Functionally, component of the elongator complex, which is required for multiple tRNA modifications, including mcm5U (5-methoxycarbonylmethyl uridine), mcm5s2U (5-methoxycarbonylmethyl-2-thiouridine), and ncm5U (5-carbamoylmethyl uridine). The elongator complex catalyzes the formation of carboxymethyluridine in the wobble base at position 34 in tRNAs. Binding by the elongator complex stabilizes microtubules and promotes their growth. This induces central spindle asymmetry, promoting polarized signaling endosome trafficking during asymmetric cell division and cell fate assignation of sensory organ precursor cells. The chain is Elongator complex protein 5 from Drosophila melanogaster (Fruit fly).